The chain runs to 155 residues: Small ribosomal subunit protein uS7 (155 aa).

This sequence belongs to the universal ribosomal protein uS7 family. As to quaternary structure, part of the 30S ribosomal subunit. Contacts proteins S9 and S11.

Functionally, one of the primary rRNA binding proteins, it binds directly to 16S rRNA where it nucleates assembly of the head domain of the 30S subunit. Is located at the subunit interface close to the decoding center, probably blocks exit of the E-site tRNA. This Desulforapulum autotrophicum (strain ATCC 43914 / DSM 3382 / VKM B-1955 / HRM2) (Desulfobacterium autotrophicum) protein is Small ribosomal subunit protein uS7.